The primary structure comprises 456 residues: Bifunctional protein GlmU (456 aa).

The interval 1 to 229 (MLNSAMSVVI…ISETDGVNNR (229 aa)) is pyrophosphorylase. Residues 11-14 (LAAG), K25, Q76, 81-82 (GT), 103-105 (YGD), G140, E154, N169, and N227 contribute to the UDP-N-acetyl-alpha-D-glucosamine site. A Mg(2+)-binding site is contributed by D105. N227 is a binding site for Mg(2+). The interval 230–250 (LQLSRLERIYQAEQAEKLLLS) is linker. The segment at 251–456 (GVMLRDPARF…QGWQRPVKKK (206 aa)) is N-acetyltransferase. The UDP-N-acetyl-alpha-D-glucosamine site is built by R333 and K351. H363 serves as the catalytic Proton acceptor. Positions 366 and 377 each coordinate UDP-N-acetyl-alpha-D-glucosamine. Residues A380, 386-387 (NY), S405, A423, and R440 contribute to the acetyl-CoA site.

It in the N-terminal section; belongs to the N-acetylglucosamine-1-phosphate uridyltransferase family. The protein in the C-terminal section; belongs to the transferase hexapeptide repeat family. Homotrimer. Requires Mg(2+) as cofactor.

Its subcellular location is the cytoplasm. It catalyses the reaction alpha-D-glucosamine 1-phosphate + acetyl-CoA = N-acetyl-alpha-D-glucosamine 1-phosphate + CoA + H(+). The enzyme catalyses N-acetyl-alpha-D-glucosamine 1-phosphate + UTP + H(+) = UDP-N-acetyl-alpha-D-glucosamine + diphosphate. It functions in the pathway nucleotide-sugar biosynthesis; UDP-N-acetyl-alpha-D-glucosamine biosynthesis; N-acetyl-alpha-D-glucosamine 1-phosphate from alpha-D-glucosamine 6-phosphate (route II): step 2/2. It participates in nucleotide-sugar biosynthesis; UDP-N-acetyl-alpha-D-glucosamine biosynthesis; UDP-N-acetyl-alpha-D-glucosamine from N-acetyl-alpha-D-glucosamine 1-phosphate: step 1/1. The protein operates within bacterial outer membrane biogenesis; LPS lipid A biosynthesis. Functionally, catalyzes the last two sequential reactions in the de novo biosynthetic pathway for UDP-N-acetylglucosamine (UDP-GlcNAc). The C-terminal domain catalyzes the transfer of acetyl group from acetyl coenzyme A to glucosamine-1-phosphate (GlcN-1-P) to produce N-acetylglucosamine-1-phosphate (GlcNAc-1-P), which is converted into UDP-GlcNAc by the transfer of uridine 5-monophosphate (from uridine 5-triphosphate), a reaction catalyzed by the N-terminal domain. The chain is Bifunctional protein GlmU from Salmonella dublin (strain CT_02021853).